A 371-amino-acid chain; its full sequence is Glutamate 5-kinase (371 aa).

Position 8 (Lys8) interacts with ATP. Ser49, Asp136, and Asn149 together coordinate substrate. ATP is bound by residues 169–170 (TD) and 213–219 (TGGMATK). The PUA domain occupies 278-356 (TGKLILDDGA…EDIPQVLGYA (79 aa)).

Belongs to the glutamate 5-kinase family.

The protein resides in the cytoplasm. The enzyme catalyses L-glutamate + ATP = L-glutamyl 5-phosphate + ADP. It participates in amino-acid biosynthesis; L-proline biosynthesis; L-glutamate 5-semialdehyde from L-glutamate: step 1/2. Functionally, catalyzes the transfer of a phosphate group to glutamate to form L-glutamate 5-phosphate. In Acaryochloris marina (strain MBIC 11017), this protein is Glutamate 5-kinase.